The sequence spans 236 residues: uncharacterized protein (236 aa).

In terms of domain architecture, ABC transporter spans 4–225 (LLEASIEQAG…TGLEGQSLLD (222 aa)). 38–45 (GANGAGKS) contacts ATP.

The protein belongs to the ABC transporter superfamily.

This is an uncharacterized protein from Bacillus subtilis (strain 168).